Reading from the N-terminus, the 476-residue chain is Aspartyl/glutamyl-tRNA(Asn/Gln) amidotransferase subunit B (476 aa).

The protein belongs to the GatB/GatE family. GatB subfamily. As to quaternary structure, heterotrimer of A, B and C subunits.

It carries out the reaction L-glutamyl-tRNA(Gln) + L-glutamine + ATP + H2O = L-glutaminyl-tRNA(Gln) + L-glutamate + ADP + phosphate + H(+). The enzyme catalyses L-aspartyl-tRNA(Asn) + L-glutamine + ATP + H2O = L-asparaginyl-tRNA(Asn) + L-glutamate + ADP + phosphate + 2 H(+). Allows the formation of correctly charged Asn-tRNA(Asn) or Gln-tRNA(Gln) through the transamidation of misacylated Asp-tRNA(Asn) or Glu-tRNA(Gln) in organisms which lack either or both of asparaginyl-tRNA or glutaminyl-tRNA synthetases. The reaction takes place in the presence of glutamine and ATP through an activated phospho-Asp-tRNA(Asn) or phospho-Glu-tRNA(Gln). This is Aspartyl/glutamyl-tRNA(Asn/Gln) amidotransferase subunit B from Listeria welshimeri serovar 6b (strain ATCC 35897 / DSM 20650 / CCUG 15529 / CIP 8149 / NCTC 11857 / SLCC 5334 / V8).